A 294-amino-acid polypeptide reads, in one-letter code: Cell division protein FtsQ (294 aa).

Over 1–26 (MARGPNRRRVDRVPGERRRRLARAMA) the chain is Cytoplasmic. A helical membrane pass occupies residues 27–49 (LALPSILALAALGGAATLGWRVG). Topologically, residues 50-294 (WKSDLLRVRE…GPQGRSSSLR (245 aa)) are periplasmic. A POTRA domain is found at 55–123 (LRVREIRFEG…PALEVQLAER (69 aa)). A disordered region spans residues 266–294 (AGRRGEPDGRSSYAAGGGGGPQGRSSSLR).

It belongs to the FtsQ/DivIB family. FtsQ subfamily.

It localises to the cell inner membrane. Functionally, essential cell division protein. The chain is Cell division protein FtsQ from Anaeromyxobacter sp. (strain K).